The chain runs to 199 residues: ATP-dependent Clp protease proteolytic subunit 2 (199 aa).

Ser98 functions as the Nucleophile in the catalytic mechanism. His123 is an active-site residue.

Belongs to the peptidase S14 family. Fourteen ClpP subunits assemble into 2 heptameric rings which stack back to back to give a disk-like structure with a central cavity, resembling the structure of eukaryotic proteasomes.

The protein resides in the cytoplasm. It carries out the reaction Hydrolysis of proteins to small peptides in the presence of ATP and magnesium. alpha-casein is the usual test substrate. In the absence of ATP, only oligopeptides shorter than five residues are hydrolyzed (such as succinyl-Leu-Tyr-|-NHMec, and Leu-Tyr-Leu-|-Tyr-Trp, in which cleavage of the -Tyr-|-Leu- and -Tyr-|-Trp bonds also occurs).. In terms of biological role, cleaves peptides in various proteins in a process that requires ATP hydrolysis. Has a chymotrypsin-like activity. Plays a major role in the degradation of misfolded proteins. The chain is ATP-dependent Clp protease proteolytic subunit 2 from Corynebacterium efficiens (strain DSM 44549 / YS-314 / AJ 12310 / JCM 11189 / NBRC 100395).